Here is a 236-residue protein sequence, read N- to C-terminus: tRNA (guanine-N(7)-)-methyltransferase (236 aa).

Residues aspartate 35, glutamate 60, asparagine 87, and aspartate 113 each coordinate S-adenosyl-L-methionine. Residue aspartate 113 is part of the active site. Substrate is bound by residues lysine 117 and aspartate 149.

Belongs to the class I-like SAM-binding methyltransferase superfamily. TrmB family.

The enzyme catalyses guanosine(46) in tRNA + S-adenosyl-L-methionine = N(7)-methylguanosine(46) in tRNA + S-adenosyl-L-homocysteine. Its pathway is tRNA modification; N(7)-methylguanine-tRNA biosynthesis. Catalyzes the formation of N(7)-methylguanine at position 46 (m7G46) in tRNA. The chain is tRNA (guanine-N(7)-)-methyltransferase from Parasynechococcus marenigrum (strain WH8102).